We begin with the raw amino-acid sequence, 117 residues long: Small ribosomal subunit protein uS17 (117 aa).

Residues 1-42 (MMAEAKKAAPKKAATAASKDADAKGPKHTPPNPKVRGRRKTR) form a disordered region.

Belongs to the universal ribosomal protein uS17 family. In terms of assembly, part of the 30S ribosomal subunit.

In terms of biological role, one of the primary rRNA binding proteins, it binds specifically to the 5'-end of 16S ribosomal RNA. The chain is Small ribosomal subunit protein uS17 from Mycolicibacterium paratuberculosis (strain ATCC BAA-968 / K-10) (Mycobacterium paratuberculosis).